Consider the following 430-residue polypeptide: Gamma-glutamyl phosphate reductase (430 aa).

This sequence belongs to the gamma-glutamyl phosphate reductase family.

It localises to the cytoplasm. The enzyme catalyses L-glutamate 5-semialdehyde + phosphate + NADP(+) = L-glutamyl 5-phosphate + NADPH + H(+). It participates in amino-acid biosynthesis; L-proline biosynthesis; L-glutamate 5-semialdehyde from L-glutamate: step 2/2. Its function is as follows. Catalyzes the NADPH-dependent reduction of L-glutamate 5-phosphate into L-glutamate 5-semialdehyde and phosphate. The product spontaneously undergoes cyclization to form 1-pyrroline-5-carboxylate. The sequence is that of Gamma-glutamyl phosphate reductase from Corynebacterium diphtheriae (strain ATCC 700971 / NCTC 13129 / Biotype gravis).